Consider the following 497-residue polypeptide: Acetyl-coenzyme A carboxylase carboxyl transferase subunit beta, chloroplastic (497 aa).

The region spanning 230 to 497 (LWVQCENCYG…FFPLNQNSIK (268 aa)) is the CoA carboxyltransferase N-terminal domain. Zn(2+) contacts are provided by Cys-234, Cys-237, Cys-253, and Cys-256. The C4-type zinc finger occupies 234-256 (CENCYGLNYKKFLKSKMNICEQC).

It belongs to the AccD/PCCB family. Acetyl-CoA carboxylase is a heterohexamer composed of biotin carboxyl carrier protein, biotin carboxylase and 2 subunits each of ACCase subunit alpha and ACCase plastid-coded subunit beta (accD). It depends on Zn(2+) as a cofactor.

It localises to the plastid. It is found in the chloroplast stroma. It carries out the reaction N(6)-carboxybiotinyl-L-lysyl-[protein] + acetyl-CoA = N(6)-biotinyl-L-lysyl-[protein] + malonyl-CoA. The protein operates within lipid metabolism; malonyl-CoA biosynthesis; malonyl-CoA from acetyl-CoA: step 1/1. In terms of biological role, component of the acetyl coenzyme A carboxylase (ACC) complex. Biotin carboxylase (BC) catalyzes the carboxylation of biotin on its carrier protein (BCCP) and then the CO(2) group is transferred by the transcarboxylase to acetyl-CoA to form malonyl-CoA. The polypeptide is Acetyl-coenzyme A carboxylase carboxyl transferase subunit beta, chloroplastic (Carica papaya (Papaya)).